The following is a 173-amino-acid chain: Ribosome maturation factor RimM (173 aa).

A PRC barrel domain is found at 95–173 (EGEYYWRQLE…LMVVDWDPDF (79 aa)).

This sequence belongs to the RimM family. Binds ribosomal protein uS19.

The protein localises to the cytoplasm. In terms of biological role, an accessory protein needed during the final step in the assembly of 30S ribosomal subunit, possibly for assembly of the head region. Essential for efficient processing of 16S rRNA. May be needed both before and after RbfA during the maturation of 16S rRNA. It has affinity for free ribosomal 30S subunits but not for 70S ribosomes. The polypeptide is Ribosome maturation factor RimM (Hahella chejuensis (strain KCTC 2396)).